Here is a 219-residue protein sequence, read N- to C-terminus: Putative protease Do-like 6, chloroplastic (219 aa).

Residues 1–45 constitute a chloroplast transit peptide; that stretch reads MLFRSVHHIVARFSNSTSTPIHRFFYSPSLLRRRSSFNASLISRC. Residues 61-216 form a serine protease region; the sequence is KIFSFSREPN…YSGQINKKIY (156 aa). Catalysis depends on charge relay system residues H99, D130, and S208.

The protein belongs to the peptidase S1B family.

The protein localises to the plastid. It localises to the chloroplast. Functionally, putative serine protease. This Arabidopsis thaliana (Mouse-ear cress) protein is Putative protease Do-like 6, chloroplastic (DEGP6).